The chain runs to 190 residues: Orotate phosphoribosyltransferase (190 aa).

E114–S122 provides a ligand contact to 5-phospho-alpha-D-ribose 1-diphosphate. Residues T118 and R146 each coordinate orotate.

Belongs to the purine/pyrimidine phosphoribosyltransferase family. PyrE subfamily. In terms of assembly, homodimer. Mg(2+) is required as a cofactor.

It catalyses the reaction orotidine 5'-phosphate + diphosphate = orotate + 5-phospho-alpha-D-ribose 1-diphosphate. The protein operates within pyrimidine metabolism; UMP biosynthesis via de novo pathway; UMP from orotate: step 1/2. Catalyzes the transfer of a ribosyl phosphate group from 5-phosphoribose 1-diphosphate to orotate, leading to the formation of orotidine monophosphate (OMP). This is Orotate phosphoribosyltransferase from Pelotomaculum thermopropionicum (strain DSM 13744 / JCM 10971 / SI).